Here is a 173-residue protein sequence, read N- to C-terminus: Small ribosomal subunit protein mS25 (173 aa).

The protein belongs to the mitochondrion-specific ribosomal protein mS25 family. Component of the mitochondrial small ribosomal subunit (mt-SSU). Mature mammalian 55S mitochondrial ribosomes consist of a small (28S) and a large (39S) subunit. The 28S small subunit contains a 12S ribosomal RNA (12S mt-rRNA) and 30 different proteins. The 39S large subunit contains a 16S rRNA (16S mt-rRNA), a copy of mitochondrial valine transfer RNA (mt-tRNA(Val)), which plays an integral structural role, and 52 different proteins.

It localises to the mitochondrion. This chain is Small ribosomal subunit protein mS25 (MRPS25), found in Homo sapiens (Human).